Here is a 565-residue protein sequence, read N- to C-terminus: Phosphoenolpyruvate-protein phosphotransferase (565 aa).

His-191 acts as the Tele-phosphohistidine intermediate in catalysis. Phosphoenolpyruvate is bound by residues Arg-289 and Arg-325. Positions 427 and 451 each coordinate Mg(2+). Phosphoenolpyruvate is bound by residues 450–451 and Arg-461; that span reads ND. Residue Cys-498 is the Proton donor of the active site.

This sequence belongs to the PEP-utilizing enzyme family. As to quaternary structure, homodimer. Mg(2+) is required as a cofactor.

Its subcellular location is the cytoplasm. The catalysed reaction is L-histidyl-[protein] + phosphoenolpyruvate = N(pros)-phospho-L-histidyl-[protein] + pyruvate. General (non sugar-specific) component of the phosphoenolpyruvate-dependent sugar phosphotransferase system (sugar PTS). This major carbohydrate active-transport system catalyzes the phosphorylation of incoming sugar substrates concomitantly with their translocation across the cell membrane. Enzyme I transfers the phosphoryl group from phosphoenolpyruvate (PEP) to the phosphoryl carrier protein (HPr). The protein is Phosphoenolpyruvate-protein phosphotransferase (ptsI) of Haloferax volcanii (strain ATCC 29605 / DSM 3757 / JCM 8879 / NBRC 14742 / NCIMB 2012 / VKM B-1768 / DS2) (Halobacterium volcanii).